We begin with the raw amino-acid sequence, 511 residues long: Sterol 14-alpha demethylase resB (511 aa).

The helical transmembrane segment at 3-23 (ILWIVAYALLAFAASIALNLV) threads the bilayer. Cys451 is a heme binding site.

The protein belongs to the cytochrome P450 family. It depends on heme as a cofactor.

It localises to the membrane. The catalysed reaction is a 14alpha-methyl steroid + 3 reduced [NADPH--hemoprotein reductase] + 3 O2 = a Delta(14) steroid + formate + 3 oxidized [NADPH--hemoprotein reductase] + 4 H2O + 4 H(+). It carries out the reaction a 14alpha-methyl steroid + reduced [NADPH--hemoprotein reductase] + O2 = a 14alpha-hydroxymethyl steroid + oxidized [NADPH--hemoprotein reductase] + H2O + H(+). The enzyme catalyses a 14alpha-hydroxymethyl steroid + reduced [NADPH--hemoprotein reductase] + O2 = a 14alpha-formyl steroid + oxidized [NADPH--hemoprotein reductase] + 2 H2O + H(+). It catalyses the reaction a 14alpha-formyl steroid + reduced [NADPH--hemoprotein reductase] + O2 = a Delta(14) steroid + formate + oxidized [NADPH--hemoprotein reductase] + H2O + 2 H(+). The catalysed reaction is lanosterol + 3 reduced [NADPH--hemoprotein reductase] + 3 O2 = 4,4-dimethyl-5alpha-cholesta-8,14,24-trien-3beta-ol + formate + 3 oxidized [NADPH--hemoprotein reductase] + 4 H2O + 4 H(+). It carries out the reaction lanosterol + reduced [NADPH--hemoprotein reductase] + O2 = 32-hydroxylanosterol + oxidized [NADPH--hemoprotein reductase] + H2O + H(+). The enzyme catalyses 32-hydroxylanosterol + reduced [NADPH--hemoprotein reductase] + O2 = 32-oxolanosterol + oxidized [NADPH--hemoprotein reductase] + 2 H2O + H(+). It catalyses the reaction 32-oxolanosterol + reduced [NADPH--hemoprotein reductase] + O2 = 4,4-dimethyl-5alpha-cholesta-8,14,24-trien-3beta-ol + formate + oxidized [NADPH--hemoprotein reductase] + H2O + 2 H(+). The catalysed reaction is eburicol + 3 reduced [NADPH--hemoprotein reductase] + 3 O2 = 14-demethyleburicol + formate + 3 oxidized [NADPH--hemoprotein reductase] + 4 H2O + 4 H(+). It carries out the reaction eburicol + reduced [NADPH--hemoprotein reductase] + O2 = 32-hydroxyeburicol + oxidized [NADPH--hemoprotein reductase] + H2O + H(+). The enzyme catalyses 32-hydroxyeburicol + reduced [NADPH--hemoprotein reductase] + O2 = 32-oxoeburicol + oxidized [NADPH--hemoprotein reductase] + 2 H2O + H(+). It catalyses the reaction 32-oxoeburicol + reduced [NADPH--hemoprotein reductase] + O2 = 14-demethyleburicol + formate + oxidized [NADPH--hemoprotein reductase] + H2O + 2 H(+). Functionally, sterol 14-alpha demethylase; part of the gene cluster that mediates the biosynthesis of the tetrahydropyranyl antifungal agent restricticin that acts as an inhibitor of CYP51 and blocks the ergosterol biosynthesis. Sterol 14-alpha-demethylase plays a critical role in the biosynthesis of ergosterol, the major sterol component in fungal membranes that participates in a variety of functions. ResB acts as a self-resistant CYP51 that contains mutations found in CYP51s isolated from azole resistance strains and that is not inhibited by the final product of the cluster, restricticin. This chain is Sterol 14-alpha demethylase resB, found in Aspergillus sclerotiorum.